The sequence spans 815 residues: SNF1 protein kinase subunit beta-1 (815 aa).

Residues 1–11 (MGNSPSTQDPS) show a composition bias toward polar residues. Disordered stretches follow at residues 1–88 (MGNS…TIDK) and 120–146 (HDVG…TVKR). G2 carries the N-myristoyl glycine lipid modification. The segment covering 12–31 (HSTKKEHGHHFHDAFNKDRQ) has biased composition (basic and acidic residues). Over residues 32-42 (GSITSQLFNNR) the composition is skewed to polar residues. S33 bears the Phosphoserine mark. 2 stretches are compositionally biased toward basic and acidic residues: residues 72–88 (PSTD…TIDK) and 120–129 (HDVGAPEEQV). 6 positions are modified to phosphoserine: S181, S198, S200, S206, S209, and S220. Disordered regions lie at residues 311-335 (HANN…NDDF), 363-389 (HHNK…FASL), and 410-444 (PLHP…SSIS). A compositionally biased stretch (low complexity) spans 313-326 (NNNGNIENNTRNKG). S331 is subject to Phosphoserine. Residues 363–376 (HHNKTKKAQSKKIR) show a composition bias toward basic residues. 2 stretches are compositionally biased toward low complexity: residues 377–389 (SASN…FASL) and 433–444 (HSNSMSSMSSIS). The tract at residues 473–716 (VSTDIASALK…LQQGGNIDAE (244 aa)) is kinase-interacting sequence (KIS); required for interaction with SNF1. 2 positions are modified to phosphoserine: S494 and S497. Positions 581–616 (EPTLDEELPKRPELKRFPSSSRKSSYYSAKGVERPS) are disordered. Residues 587 to 596 (ELPKRPELKR) show a composition bias toward basic and acidic residues. Positions 599-608 (SSSRKSSYYS) are enriched in low complexity. Position 643 is a phosphoserine (S643). The interval 724-804 (SRYPVPDLPI…FITQVVYAPC (81 aa)) is association with SNF1 kinase complex (ASC) domain; required for interaction with SNF4.

The protein belongs to the 5'-AMP-activated protein kinase beta subunit family. Component of the SNF1 kinase complex, a heterotrimeric complex composed of the catalytic alpha subunit SNF1, one of the three related beta subunits SIP1, SIP2 or GAL83, and the regulatory gamma subunit SNF4. The beta subunit serves as a bridge between the catalytic and the regulatory subunit. Interacts (via KIS domain) with SNF1. Interacts (via ASC domain) with SNF4. In terms of processing, phosphorylated by SNF1 in vitro.

Its subcellular location is the cytoplasm. The protein resides in the vacuole membrane. In terms of biological role, beta subunit of the SNF1 kinase complex, which is required for transcriptional, metabolic, and developmental adaptations in response to glucose limitation. Has a structural role, mediating heterotrimer formation, and a regulatory role, defining carbon source-regulated subcellular location and substrate specificity of the SNF1 kinase complex. Promotes the PKA-regulated relocalization of the SNF1 kinase complex to the vacuolar membrane in response to various types of carbon stress. The polypeptide is SNF1 protein kinase subunit beta-1 (SIP1) (Saccharomyces cerevisiae (strain RM11-1a) (Baker's yeast)).